Here is a 159-residue protein sequence, read N- to C-terminus: uncharacterized protein (159 aa).

The interval Val-9–Ser-36 is disordered.

This is an uncharacterized protein from Caenorhabditis elegans.